The sequence spans 124 residues: Small ribosomal subunit protein uS12 (124 aa).

The tract at residues 1 to 30 is disordered; that stretch reads MPTIQQLVRKGRTPKVTKTKAPALKANPQQ. Positions 9-18 are enriched in basic residues; it reads RKGRTPKVTK.

Belongs to the universal ribosomal protein uS12 family. In terms of assembly, part of the 30S ribosomal subunit. Contacts proteins S8 and S17. May interact with IF1 in the 30S initiation complex.

Its function is as follows. With S4 and S5 plays an important role in translational accuracy. Interacts with and stabilizes bases of the 16S rRNA that are involved in tRNA selection in the A site and with the mRNA backbone. Located at the interface of the 30S and 50S subunits, it traverses the body of the 30S subunit contacting proteins on the other side and probably holding the rRNA structure together. The combined cluster of proteins S8, S12 and S17 appears to hold together the shoulder and platform of the 30S subunit. The sequence is that of Small ribosomal subunit protein uS12 from Leifsonia xyli subsp. xyli (strain CTCB07).